We begin with the raw amino-acid sequence, 314 residues long: 4-hydroxy-3-methylbut-2-enyl diphosphate reductase (314 aa).

Residue C12 coordinates [4Fe-4S] cluster. (2E)-4-hydroxy-3-methylbut-2-enyl diphosphate contacts are provided by H41 and H74. The dimethylallyl diphosphate site is built by H41 and H74. Isopentenyl diphosphate contacts are provided by H41 and H74. Position 96 (C96) interacts with [4Fe-4S] cluster. H124 serves as a coordination point for (2E)-4-hydroxy-3-methylbut-2-enyl diphosphate. H124 is a dimethylallyl diphosphate binding site. H124 contributes to the isopentenyl diphosphate binding site. E126 (proton donor) is an active-site residue. Position 167 (T167) interacts with (2E)-4-hydroxy-3-methylbut-2-enyl diphosphate. Residue C197 participates in [4Fe-4S] cluster binding. S225, S226, N227, and S269 together coordinate (2E)-4-hydroxy-3-methylbut-2-enyl diphosphate. Dimethylallyl diphosphate is bound by residues S225, S226, N227, and S269. Residues S225, S226, N227, and S269 each contribute to the isopentenyl diphosphate site.

It belongs to the IspH family. The cofactor is [4Fe-4S] cluster.

The enzyme catalyses isopentenyl diphosphate + 2 oxidized [2Fe-2S]-[ferredoxin] + H2O = (2E)-4-hydroxy-3-methylbut-2-enyl diphosphate + 2 reduced [2Fe-2S]-[ferredoxin] + 2 H(+). The catalysed reaction is dimethylallyl diphosphate + 2 oxidized [2Fe-2S]-[ferredoxin] + H2O = (2E)-4-hydroxy-3-methylbut-2-enyl diphosphate + 2 reduced [2Fe-2S]-[ferredoxin] + 2 H(+). The protein operates within isoprenoid biosynthesis; dimethylallyl diphosphate biosynthesis; dimethylallyl diphosphate from (2E)-4-hydroxy-3-methylbutenyl diphosphate: step 1/1. It participates in isoprenoid biosynthesis; isopentenyl diphosphate biosynthesis via DXP pathway; isopentenyl diphosphate from 1-deoxy-D-xylulose 5-phosphate: step 6/6. Its function is as follows. Catalyzes the conversion of 1-hydroxy-2-methyl-2-(E)-butenyl 4-diphosphate (HMBPP) into a mixture of isopentenyl diphosphate (IPP) and dimethylallyl diphosphate (DMAPP). Acts in the terminal step of the DOXP/MEP pathway for isoprenoid precursor biosynthesis. In Actinobacillus pleuropneumoniae serotype 3 (strain JL03), this protein is 4-hydroxy-3-methylbut-2-enyl diphosphate reductase.